Here is a 529-residue protein sequence, read N- to C-terminus: Glycylpeptide N-tetradecanoyltransferase (529 aa).

Residues 1 to 10 (MSEQEGNQSE) are compositionally biased toward polar residues. Positions 1–65 (MSEQEGNQSE…ANPATKLTPS (65 aa)) are disordered. Residues 11 to 23 (HQSEHVGESEGKL) are compositionally biased toward basic and acidic residues. Residues 26 to 40 (ETPTTSQSTNASTGT) show a composition bias toward polar residues. Residues 118-121 (FKFW), 252-254 (LCV), and 260-264 (SKRLT) each bind tetradecanoyl-CoA. V529 serves as the catalytic Proton acceptor; via carboxylate.

The protein belongs to the NMT family. Monomer.

The protein resides in the cytoplasm. It catalyses the reaction N-terminal glycyl-[protein] + tetradecanoyl-CoA = N-tetradecanoylglycyl-[protein] + CoA + H(+). Functionally, adds a myristoyl group to the N-terminal glycine residue of certain cellular proteins. This Ajellomyces capsulatus (Darling's disease fungus) protein is Glycylpeptide N-tetradecanoyltransferase.